A 126-amino-acid polypeptide reads, in one-letter code: Aspartate 1-decarboxylase (126 aa).

Residue serine 25 is the Schiff-base intermediate with substrate; via pyruvic acid of the active site. Serine 25 bears the Pyruvic acid (Ser) mark. Threonine 57 contacts substrate. Tyrosine 58 functions as the Proton donor in the catalytic mechanism. 73 to 75 (GAA) is a substrate binding site.

The protein belongs to the PanD family. As to quaternary structure, heterooctamer of four alpha and four beta subunits. Pyruvate serves as cofactor. In terms of processing, is synthesized initially as an inactive proenzyme, which is activated by self-cleavage at a specific serine bond to produce a beta-subunit with a hydroxyl group at its C-terminus and an alpha-subunit with a pyruvoyl group at its N-terminus.

The protein localises to the cytoplasm. It catalyses the reaction L-aspartate + H(+) = beta-alanine + CO2. It participates in cofactor biosynthesis; (R)-pantothenate biosynthesis; beta-alanine from L-aspartate: step 1/1. Catalyzes the pyruvoyl-dependent decarboxylation of aspartate to produce beta-alanine. This Cronobacter sakazakii (strain ATCC BAA-894) (Enterobacter sakazakii) protein is Aspartate 1-decarboxylase.